Consider the following 185-residue polypeptide: Elongation factor P (185 aa).

It belongs to the elongation factor P family.

It localises to the cytoplasm. It participates in protein biosynthesis; polypeptide chain elongation. Involved in peptide bond synthesis. Stimulates efficient translation and peptide-bond synthesis on native or reconstituted 70S ribosomes in vitro. Probably functions indirectly by altering the affinity of the ribosome for aminoacyl-tRNA, thus increasing their reactivity as acceptors for peptidyl transferase. The protein is Elongation factor P of Pelotomaculum thermopropionicum (strain DSM 13744 / JCM 10971 / SI).